A 138-amino-acid chain; its full sequence is Large ribosomal subunit protein uL16 (138 aa).

The span at 1–13 (MLQPKRRKYRKEQ) shows a compositional bias: basic residues. The disordered stretch occupies residues 1–24 (MLQPKRRKYRKEQKGRNTGKATRG).

It belongs to the universal ribosomal protein uL16 family. In terms of assembly, part of the 50S ribosomal subunit.

Binds 23S rRNA and is also seen to make contacts with the A and possibly P site tRNAs. This chain is Large ribosomal subunit protein uL16, found in Burkholderia ambifaria (strain ATCC BAA-244 / DSM 16087 / CCUG 44356 / LMG 19182 / AMMD) (Burkholderia cepacia (strain AMMD)).